A 493-amino-acid polypeptide reads, in one-letter code: Cysteine sulfinic acid decarboxylase (493 aa).

Residue Lys305 is modified to N6-(pyridoxal phosphate)lysine.

Belongs to the group II decarboxylase family. As to quaternary structure, homodimer. Pyridoxal 5'-phosphate is required as a cofactor. Expressed in liver and brain. Also expressed in both astrocytes and neurons, but lower levels are expressed in astrocytes.

The enzyme catalyses L-aspartate + H(+) = beta-alanine + CO2. The catalysed reaction is 3-sulfino-L-alanine + H(+) = hypotaurine + CO2. It catalyses the reaction L-cysteate + H(+) = taurine + CO2. Its pathway is organosulfur biosynthesis; taurine biosynthesis; hypotaurine from L-cysteine: step 2/2. In terms of biological role, catalyzes the decarboxylation of L-aspartate, 3-sulfino-L-alanine (cysteine sulfinic acid), and L-cysteate to beta-alanine, hypotaurine and taurine, respectively. The preferred substrate is 3-sulfino-L-alanine. Does not exhibit any decarboxylation activity toward glutamate. This Homo sapiens (Human) protein is Cysteine sulfinic acid decarboxylase (CSAD).